Consider the following 100-residue polypeptide: uncharacterized protein (100 aa).

A coiled-coil region spans residues Pro65 to Phe96.

This is an uncharacterized protein from Acidianus filamentous virus 2 (isolate Italy/Pozzuoli) (AFV-2).